The sequence spans 321 residues: Probable arabinan endo-1,5-alpha-L-arabinosidase A (321 aa).

An N-terminal signal peptide occupies residues 1–19 (MSASAFVAVASCLAALVHG). The active-site Proton acceptor is the D34. Catalysis depends on E200, which acts as the Proton donor.

The protein belongs to the glycosyl hydrolase 43 family.

It localises to the secreted. It catalyses the reaction Endohydrolysis of (1-&gt;5)-alpha-arabinofuranosidic linkages in (1-&gt;5)-arabinans.. It participates in glycan metabolism; L-arabinan degradation. In terms of biological role, endo-1,5-alpha-L-arabinanase involved in degradation of pectin. Its preferred substrate is linear 1,5-alpha-L-arabinan. This is Probable arabinan endo-1,5-alpha-L-arabinosidase A (abnA) from Neosartorya fischeri (strain ATCC 1020 / DSM 3700 / CBS 544.65 / FGSC A1164 / JCM 1740 / NRRL 181 / WB 181) (Aspergillus fischerianus).